Here is a 342-residue protein sequence, read N- to C-terminus: Succinylglutamate desuccinylase (342 aa).

Residues His63, Glu66, and His155 each coordinate Zn(2+). Glu219 is a catalytic residue.

The protein belongs to the AspA/AstE family. Succinylglutamate desuccinylase subfamily. It depends on Zn(2+) as a cofactor.

It catalyses the reaction N-succinyl-L-glutamate + H2O = L-glutamate + succinate. Its pathway is amino-acid degradation; L-arginine degradation via AST pathway; L-glutamate and succinate from L-arginine: step 5/5. Transforms N(2)-succinylglutamate into succinate and glutamate. This is Succinylglutamate desuccinylase from Vibrio cholerae serotype O1 (strain ATCC 39315 / El Tor Inaba N16961).